Consider the following 883-residue polypeptide: MKIKIINNDFPVAKIGLDRITTLVSAKVHNCIYRPRLSIADGTAPRVCLYRAPPGYGKTVALAFEWLRHRTTGRPAVWISLRASSYSEFDICAEIIEQLEAFELVTFSHVREGVSKPTLLRDLASSLWQSTSSNEIETLICLDNINQGLGLPLLHALMEFMLETPKSIRFAVAGNTIKGFSRLKLAGAMQEHTEKDLAFSADEAVALVEAEAVLGVSEVQIEALVQEMEGWPVLIGFLLKCELPAKSISTVVEIDNYFNDEIFEALPERYRVFLVNSSLLDVVTPDGYNYVFKCVNAASCIKYLSTNYMLLRHVEGEPAQFTLHPVLRDFLQGIAWAENPAKRSYLLKRAAFWHWRRGEYQYAIRIALRANDCRWAVGMSEGIILDLSFRQGEIDTLRHWLSELPVKDLHKNPIVLICFAWVLYFSQQSARAEKLLKDLITPPDKKNKWQEKGWPQLVFAIGKATNDEMLLSEELCNKWISLFGDSNAVGKGAALTCLAFIFASEYRFAELEKVLAQAQAVNKFAKQDFAFGWLYVAKLQQALASGKMSWARQLITQARTDSGAQIMETAFTSKMLDALELESNYELCRLDTSEEKFSEILEFIANHGVTDVFFSVCRVVSAWRLGRNDLNGSIEILEWAKAYAAEKNLPRLEVMSQIEIYQRLLFQGVTYINTLQAFEDRKIFSGPHSAPLKARLLLVQSLALSRDQNFHLAAHRALLAIQQARKISAGQLEVRGLLYLAGAQAGGGTLKKAQHNIAYALEMAKQLQCFQTVLDEIRLIKRLIPTSCEVFAAVNLDQAIGAFSLPQMVEIRKSAENKAGDFLTLKQVSVLKLVKEGCSNKQIATKMYVTEDAIKWHMRKIFTILNVKSRTQAIIEAERQGVI.

Residues 816-881 (ENKAGDFLTL…QAIIEAERQG (66 aa)) enclose the HTH luxR-type domain. Positions 840 to 859 (NKQIATKMYVTEDAIKWHMR) form a DNA-binding region, H-T-H motif.

It functions in the pathway hydrocarbon metabolism; alkane degradation. Functionally, may act as a transcriptional regulator of AlkB. The sequence is that of HTH-type transcriptional regulator AlkS (alkS) from Pseudomonas putida (Arthrobacter siderocapsulatus).